A 93-amino-acid polypeptide reads, in one-letter code: Ribonuclease P protein component 4 (93 aa).

Residues Cys-55, Cys-58, Cys-81, and Cys-83 each coordinate Zn(2+).

It belongs to the eukaryotic/archaeal RNase P protein component 4 family. In terms of assembly, consists of a catalytic RNA component and at least 4-5 protein subunits. Zn(2+) serves as cofactor.

It is found in the cytoplasm. It carries out the reaction Endonucleolytic cleavage of RNA, removing 5'-extranucleotides from tRNA precursor.. Its function is as follows. Part of ribonuclease P, a protein complex that generates mature tRNA molecules by cleaving their 5'-ends. The sequence is that of Ribonuclease P protein component 4 from Halobacterium salinarum (strain ATCC 29341 / DSM 671 / R1).